A 61-amino-acid chain; its full sequence is Three-finger hemachatoxin (61 aa).

4 cysteine pairs are disulfide-bonded: C3-C22, C15-C39, C43-C54, and C55-C60.

It belongs to the three-finger toxin family. Short-chain subfamily. Type IB cytotoxin sub-subfamily. As to expression, expressed by the venom gland.

The protein resides in the secreted. This protein lyses red blood cells and has cardiotoxic and hypotensive activities. The polypeptide is Three-finger hemachatoxin (Hemachatus haemachatus (Rinkhals)).